A 169-amino-acid polypeptide reads, in one-letter code: 16S rRNA aminocarboxypropyltransferase (169 aa).

S-adenosyl-L-methionine-binding residues include threonine 15, valine 65, leucine 88, and threonine 107.

This sequence belongs to the TDD superfamily. TSR3 family.

The protein localises to the cytoplasm. The catalysed reaction is an N(1)-methylpseudouridine in rRNA + S-adenosyl-L-methionine = N(1)-methyl-N(3)-[(3S)-3-amino-3-carboxypropyl]pseudouridine in rRNA + S-methyl-5'-thioadenosine + H(+). Aminocarboxypropyltransferase that catalyzes the aminocarboxypropyl transfer on pseudouridine corresponding to position 914 in M.jannaschii 16S rRNA. It constitutes the last step in biosynthesis of the hypermodified N1-methyl-N3-(3-amino-3-carboxypropyl) pseudouridine (m1acp3-Psi). This chain is 16S rRNA aminocarboxypropyltransferase, found in Methanopyrus kandleri (strain AV19 / DSM 6324 / JCM 9639 / NBRC 100938).